Here is a 167-residue protein sequence, read N- to C-terminus: MSEAIIAKKAEQVAIVADKMKAAASIVVVDSRGLTVDQDTVLRRNLRESGVEFKVIKNSILSRAAEKAGLEDLKKLFVGPSAVAFSNEDVIAPAKVISEFAKGAEALEIKGGVVDGAITSVEEINALASLPNKEGMLSMLLSVLQAPVRNVAYAVKAVAESKEDGAA.

The protein belongs to the universal ribosomal protein uL10 family. As to quaternary structure, part of the ribosomal stalk of the 50S ribosomal subunit. The N-terminus interacts with L11 and the large rRNA to form the base of the stalk. The C-terminus forms an elongated spine to which L12 dimers bind in a sequential fashion forming a multimeric L10(L12)X complex.

In terms of biological role, forms part of the ribosomal stalk, playing a central role in the interaction of the ribosome with GTP-bound translation factors. This is Large ribosomal subunit protein uL10 from Streptococcus thermophilus (strain CNRZ 1066).